The chain runs to 506 residues: UDP-N-acetylglucosamine--peptide N-acetylglucosaminyltransferase GtfA subunit (506 aa).

The interval 1–78 is N-terminus R-fold-1; it reads MTVYNINLGI…FTDIKIAPTT (78 aa). UDP is bound at residue 16 to 19; that stretch reads GVEY. The interval 79-195 is extended beta-sheet domain; it reads VTLDQVLAQV…LYRFPDRIFY (117 aa). The segment at 196-306 is C-terminus R-fold-1; it reads SKAELVRYFL…QPQIATIPVG (111 aa). His242 serves as a coordination point for N-acetyl-D-glucosamine. The segment at 307–506 is R-fold-2; the sequence is SLDQLTYPKE…LKEVRDDSAL (200 aa). UDP-binding positions include Arg328, Tyr357, and 383–385; that span reads GHA. 405 to 407 provides a ligand contact to N-acetyl-D-glucosamine; that stretch reads GFG. Thr409 serves as a coordination point for UDP.

The protein belongs to the glycosyltransferase group 1 family. Glycosyltransferase 4 subfamily. As to quaternary structure, forms a heterotetramer with 2 subunits each of GtfA and GtfB. Part of the accessory SecA2/SecY2 protein translocation apparatus required to export cell wall protein GspB.

It localises to the cytoplasm. It is found in the cell membrane. It catalyses the reaction L-seryl-[protein] + UDP-N-acetyl-alpha-D-glucosamine = 3-O-[N-acetyl-alpha-D-glucosaminyl]-L-seryl-[protein] + UDP + H(+). It functions in the pathway protein modification; protein glycosylation. Required for polymorphic O-glycosylation of GspB, a serine-rich repeat cell wall protein encoded upstream in the same operon. Catalyzes the first step in glycosylation by transferring N-acetylglucosamine from UDP-GlcNAc to serine residues in GspB. Part of the accessory SecA2/SecY2 system specifically required to export GspB. Upon coexpression in E.coli with GtfB glycosylates GspB constructs. Glycosylation probably occurs intracellularly. Requires GtfB for glycosylation activity, it has no activity alone. Does not use UDP-glucose as substrate. Has a fast, probably processive glycosylation phase followed by a slower, non-processive phase. The enzyme probably modifies its tertiary conformation by opening and closing its intersubunit interfaces to accomodate the increasingly glycosylated substrate; protein substrate recognition is provided by GtfB. The protein is UDP-N-acetylglucosamine--peptide N-acetylglucosaminyltransferase GtfA subunit of Streptococcus gordonii.